Consider the following 467-residue polypeptide: Asparagine--tRNA ligase (467 aa).

This sequence belongs to the class-II aminoacyl-tRNA synthetase family. In terms of assembly, homodimer.

Its subcellular location is the cytoplasm. The catalysed reaction is tRNA(Asn) + L-asparagine + ATP = L-asparaginyl-tRNA(Asn) + AMP + diphosphate + H(+). In Legionella pneumophila (strain Paris), this protein is Asparagine--tRNA ligase.